The sequence spans 295 residues: ATP synthase gamma chain (295 aa).

The protein belongs to the ATPase gamma chain family. F-type ATPases have 2 components, CF(1) - the catalytic core - and CF(0) - the membrane proton channel. CF(1) has five subunits: alpha(3), beta(3), gamma(1), delta(1), epsilon(1). CF(0) has three main subunits: a, b and c.

It is found in the cell inner membrane. Produces ATP from ADP in the presence of a proton gradient across the membrane. The gamma chain is believed to be important in regulating ATPase activity and the flow of protons through the CF(0) complex. The sequence is that of ATP synthase gamma chain from Chlorobium phaeobacteroides (strain BS1).